A 179-amino-acid polypeptide reads, in one-letter code: Large ribosomal subunit protein uL6 (179 aa).

Belongs to the universal ribosomal protein uL6 family. In terms of assembly, part of the 50S ribosomal subunit.

This protein binds to the 23S rRNA, and is important in its secondary structure. It is located near the subunit interface in the base of the L7/L12 stalk, and near the tRNA binding site of the peptidyltransferase center. This chain is Large ribosomal subunit protein uL6, found in Geobacter sulfurreducens (strain ATCC 51573 / DSM 12127 / PCA).